The primary structure comprises 157 residues: Protein Smg homolog (157 aa).

It belongs to the Smg family.

In Pseudoalteromonas translucida (strain TAC 125), this protein is Protein Smg homolog.